The sequence spans 151 residues: MAENNPLKIHNLRPAPGAKTAKTRVGRGEASKGKTAGRGTKGTKARYQVPERFEGGQMPLHMRLPKLKGFKNPFKTEFQVVNLDKLAALYPEGGEVTVEGLVAKGAVRKNSLVKVLGQGEISVALQVTVDAVSGSAKEKITAAGGTVTELV.

A disordered region spans residues 1–60 (MAENNPLKIHNLRPAPGAKTAKTRVGRGEASKGKTAGRGTKGTKARYQVPERFEGGQMPL).

It belongs to the universal ribosomal protein uL15 family. Part of the 50S ribosomal subunit.

Functionally, binds to the 23S rRNA. This is Large ribosomal subunit protein uL15 from Streptomyces coelicolor (strain ATCC BAA-471 / A3(2) / M145).